The sequence spans 371 residues: tRNA-specific 2-thiouridylase MnmA (371 aa).

ATP contacts are provided by residues Gly-7–Ser-14 and Met-33. The interaction with target base in tRNA stretch occupies residues Asn-103 to Asp-105. The active-site Nucleophile is Cys-108. Residues Cys-108 and Cys-201 are joined by a disulfide bond. Gly-133 provides a ligand contact to ATP. An interaction with tRNA region spans residues Lys-151–Gln-153. Cys-201 (cysteine persulfide intermediate) is an active-site residue. The tract at residues Arg-308–Tyr-309 is interaction with tRNA.

The protein belongs to the MnmA/TRMU family.

It is found in the cytoplasm. It carries out the reaction S-sulfanyl-L-cysteinyl-[protein] + uridine(34) in tRNA + AH2 + ATP = 2-thiouridine(34) in tRNA + L-cysteinyl-[protein] + A + AMP + diphosphate + H(+). In terms of biological role, catalyzes the 2-thiolation of uridine at the wobble position (U34) of tRNA, leading to the formation of s(2)U34. In Mycoplasmopsis pulmonis (strain UAB CTIP) (Mycoplasma pulmonis), this protein is tRNA-specific 2-thiouridylase MnmA.